A 318-amino-acid polypeptide reads, in one-letter code: MEKIIIYGGTGYIGKFMVRASLSFSHPTFIYARPLTPDSTPSSVQLREEFRSMGVTIIEGEMEEHEKMVSVLRQVDVVISALSVPMYPSQLLIIDAIKAAGNIKRFLPSEFGSEEDRIKPLPPFESVLEKKRIIRRAIEAAELPYTYVSANCFGAYFVNYLLHPSPHPNRDDDIVIYGTGETKFVLNYEEDIAKYTIKVACDPRCCNRIVIYRPPKNIISQNELISLWEAKSGLSFKKVHMPDEQLVRLSQELPQPQNIPVSILHSIFVKGDLMSYEMRKDDIEASNLYPELEFTSIDGLLDLFISGRAPPPTLAEFE.

NADP(+)-binding positions include threonine 10 to isoleucine 13, alanine 32 to serine 43, arginine 33, valine 84 to methionine 86, serine 109 to phenylalanine 111, lysine 131, and asparagine 151 to phenylalanine 153. The active-site Proton donor/acceptor is lysine 131. Proline 260 serves as a coordination point for substrate.

Belongs to the NmrA-type oxidoreductase family. In terms of tissue distribution, mostly expressed in petals, and, to a lower extent, in sepals, stamens and pistils.

The enzyme catalyses (E)-isoeugenol + acetate + NADP(+) = (E)-coniferyl acetate + NADPH. It functions in the pathway aromatic compound metabolism; phenylpropanoid biosynthesis. Functionally, catalyzes the synthesis of the phenylpropene isoeugenol from coniferyl acetate. Phenylpropenes are the primary constituents of various essential plant oils. They are produced as antimicrobial and antianimal compounds, or as floral attractants of pollinators. Isoeugenol is a characteristic aromatic constituent of spices and a floral volatile compound. The polypeptide is Isoeugenol synthase 1 (Clarkia breweri (Fairy fans)).